Consider the following 156-residue polypeptide: Arginine repressor (156 aa).

It belongs to the ArgR family.

Its subcellular location is the cytoplasm. The protein operates within amino-acid biosynthesis; L-arginine biosynthesis [regulation]. Its function is as follows. Regulates arginine biosynthesis genes. In Tolumonas auensis (strain DSM 9187 / NBRC 110442 / TA 4), this protein is Arginine repressor.